A 281-amino-acid chain; its full sequence is Mad-like protein 1 (281 aa).

The span at 71-80 (SCASNASTSS) shows a compositional bias: low complexity. Residues 71 to 105 (SCASNASTSSQPYCSSPPARKSSKHSRTAHNELEK) form a disordered region. Residues 95 to 108 (HSRTAHNELEKTRR) are basic motif. One can recognise a bHLH domain in the interval 95 to 147 (HSRTAHNELEKTRRANLRGCLETLKMLVPCVSDATRNTTLALLTRARDHIIEL). The interval 109–147 (ANLRGCLETLKMLVPCVSDATRNTTLALLTRARDHIIEL) is helix-loop-helix motif. Positions 144 to 185 (IIELQDSNAAQMKKLNDLRDEQDELVAELAQLQADEEVAQAT) form a coiled coil. The disordered stretch occupies residues 189–213 (CQTLSQSRPESRASSFTSTSSRDSP). Low complexity predominate over residues 200 to 212 (RASSFTSTSSRDS).

As to quaternary structure, forms heterodimer with mxl-1 in the presence and absence of DNA. Ubiquitinated. As to expression, expressed in intestinal cells in adults. Expressed in D-type motor neuron cell bodies.

The protein localises to the nucleus. Functionally, transcriptional regulator which binds to the E box motif 5'-CACGTG-3', when in a heterodimeric complex with mxl-1. Involved in the control of lifespan in response to dietary restriction, the decline in protein homeostasis associated with normal aging, germline signaling and may overlap with the insulin-like signaling pathway. Plays a role in autophagy. Involved in promoting infection by the microsporidian pathogen N.parisii, possibly together with transcription factors pha-4 and zip-10. In response to neuronal injury, mdl-1 is targeted by sdz-33 for ubiquitin-mediated degradation, probably thereby reducing levels of mdl-1-mxl-1 heterodimers, allowing free mxl-1 to form complexes with tdpt-1 and thus inhibiting tdpt-1-dependent sumoylation of ets-4. This is Mad-like protein 1 from Caenorhabditis elegans.